The sequence spans 83 residues: MKASMFLALAGLVLLFVVCYASESEEKEFPRELISKIFAVDDFKGEERECKGFGKSCVPGKNECCSGYACNSRDKWCKVLLGK.

Positions 1-21 (MKASMFLALAGLVLLFVVCYA) are cleaved as a signal peptide. The propeptide occupies 22 to 48 (SESEEKEFPRELISKIFAVDDFKGEER). Intrachain disulfides connect C50/C65, C57/C70, and C64/C77. L81 is subject to Leucine amide.

The protein belongs to the neurotoxin 10 (Hwtx-1) family. 14 (Hntx-1) subfamily. Monomer. Expressed by the venom gland.

It localises to the secreted. Functionally, weakly blocks the rat SCN2A/SCN1B (Nav1.2/beta-1) sodium channel (IC(50)=68 uM) and the insect sodium channel para/tipE (IC(50)=4.3 uM), without altering the activation or inactivation kinetics (depressant toxin). The polypeptide is Mu-theraphotoxin-Hhn2b 1 (Cyriopagopus hainanus (Chinese bird spider)).